The sequence spans 130 residues: Metastasis-suppressor KiSS-1 (130 aa).

A signal peptide spans 1 to 19 (MISLASWQLLLLLCVASFG). A disordered region spans residues 52-91 (RYAESKPGAAGLRARRTSPCPPVENPTGHQRPPCATRSRL). A disulfide bond links cysteine 71 and cysteine 85. Residue tyrosine 110 is modified to Phosphotyrosine. The interval 110–119 (YNWNSFGLRY) is essential for receptor binding and receptor activation. Position 119 is a tyrosine amide (tyrosine 119).

It belongs to the KISS1 family. As to expression, highest levels in the cecum and colon. Moderate levels present in the liver, spleen, kidney, ovary, uterus and small intestine. Low levels in the stomach, pancreas and placenta. Expressed only moderately in the placenta. Persistent expression is detected in hypothalamus throughout postnatal development, with maximum expression levels at puberty in both male and female. Hypothalamic expression is sensitive to neonatal imprinting by estrogen. Expression is higher in the hypothalamus than in the brainstem and spinal cord. In the brain, metastin-like immunoreactivity is found mainly in three groups of cells: dorsomedial hypothalamic nucleus, nucleus of the solitary tract, and caudal ventrolateral medulla.

It is found in the secreted. In terms of biological role, metastasis suppressor protein. May regulate events downstream of cell-matrix adhesion, perhaps involving cytoskeletal reorganization. Generates a C-terminally amidated peptide, metastin which functions as the endogenous ligand of the G-protein coupled receptor GPR54. The receptor is also essential for normal gonadotropin-released hormone physiology and for puberty. The hypothalamic KiSS1/GPR54 system is a pivotal factor in central regulation of the gonadotropic axis at puberty and in adulthood. Intracerebroventricular administration induces an increase in serum LH and FSH levels in prepubertal male and female as well as in adult animals. The polypeptide is Metastasis-suppressor KiSS-1 (Kiss1) (Rattus norvegicus (Rat)).